The primary structure comprises 334 residues: Glycerol-3-phosphate dehydrogenase [NAD(P)+] (334 aa).

The NADPH site is built by Trp13, Arg33, and Lys106. Residues Lys106, Gly137, and Ser139 each contribute to the sn-glycerol 3-phosphate site. Ala141 lines the NADPH pocket. Lys192, Asp245, Ser255, Arg256, and Asn257 together coordinate sn-glycerol 3-phosphate. The active-site Proton acceptor is Lys192. Arg256 lines the NADPH pocket. Positions 280 and 282 each coordinate NADPH.

This sequence belongs to the NAD-dependent glycerol-3-phosphate dehydrogenase family.

The protein resides in the cytoplasm. The catalysed reaction is sn-glycerol 3-phosphate + NAD(+) = dihydroxyacetone phosphate + NADH + H(+). It carries out the reaction sn-glycerol 3-phosphate + NADP(+) = dihydroxyacetone phosphate + NADPH + H(+). It participates in membrane lipid metabolism; glycerophospholipid metabolism. In terms of biological role, catalyzes the reduction of the glycolytic intermediate dihydroxyacetone phosphate (DHAP) to sn-glycerol 3-phosphate (G3P), the key precursor for phospholipid synthesis. This chain is Glycerol-3-phosphate dehydrogenase [NAD(P)+], found in Chlamydia pneumoniae (Chlamydophila pneumoniae).